We begin with the raw amino-acid sequence, 142 residues long: Arginine decarboxylase proenzyme (142 aa).

S81 serves as the catalytic Schiff-base intermediate with substrate; via pyruvic acid. The residue at position 81 (S81) is a Pyruvic acid (Ser); by autocatalysis. H86 acts as the Proton acceptor; for processing activity in catalysis. C101 acts as the Proton donor; for catalytic activity in catalysis.

The protein belongs to the prokaryotic AdoMetDC family. Type 1 subfamily. As to quaternary structure, heterooctamer of four alpha and four beta chains arranged as a tetramer of alpha/beta heterodimers. The cofactor is pyruvate. Post-translationally, is synthesized initially as an inactive proenzyme. Formation of the active enzyme involves a self-maturation process in which the active site pyruvoyl group is generated from an internal serine residue via an autocatalytic post-translational modification. Two non-identical subunits are generated from the proenzyme in this reaction, and the pyruvate is formed at the N-terminus of the alpha chain, which is derived from the carboxyl end of the proenzyme. The post-translation cleavage follows an unusual pathway, termed non-hydrolytic serinolysis, in which the side chain hydroxyl group of the serine supplies its oxygen atom to form the C-terminus of the beta chain, while the remainder of the serine residue undergoes an oxidative deamination to produce ammonia and the pyruvoyl group blocking the N-terminus of the alpha chain.

The catalysed reaction is L-arginine + H(+) = agmatine + CO2. It functions in the pathway amine and polyamine biosynthesis; agmatine biosynthesis; agmatine from L-arginine: step 1/1. Its function is as follows. Specifically catalyzes the decarboxylation of L-arginine to agmatine. Has no S-adenosylmethionine decarboxylase (AdoMetDC) activity. The sequence is that of Arginine decarboxylase proenzyme from Hyperthermus butylicus (strain DSM 5456 / JCM 9403 / PLM1-5).